The following is a 334-amino-acid chain: MATIKDVARLAGVSTTTVSHVINKTRFVAEATQEKVMKAVDELNYAPSAVARSLKCNTTRTIGMLVTQSTNLFFSEVIDGVESYCYRQGYTLILCNTGGIYEKQRDYIRMLAEKRVDGILVMCSDLTEELREMLDKHADIPKVIMDWGPISSQADKIIDNSEEGGYLATKYLIDNGHTKIACLSGHFEKAACQERIQGFKRAMKEANITLNNEWILEGNFECDTAVMAADKIASWQDRPTAVFCFNDTMALGLMSRLQQLGLRIPEDISVIGYDNIELAEYFSPPLTTIHQPKRRVGKNAFEILLERIKDKEHDKRVFEMHPELVVRDTVKKIN.

The region spanning 2-56 (ATIKDVARLAGVSTTTVSHVINKTRFVAEATQEKVMKAVDELNYAPSAVARSLKC) is the HTH lacI-type domain. A DNA-binding region (H-T-H motif) is located at residues 4–23 (IKDVARLAGVSTTTVSHVIN). The DNA-binding element occupies 48-56 (SAVARSLKC). F73, K189, F220, and D274 together coordinate hypoxanthine.

In terms of assembly, homodimer.

It functions in the pathway purine metabolism; purine nucleotide biosynthesis [regulation]. Is the main repressor of the genes involved in the de novo synthesis of purine nucleotides, regulating purB, purC, purEK, purF, purHD, purL, purMN and guaBA expression. PurR is allosterically activated to bind its cognate DNA by binding the purine corepressors, hypoxanthine or guanine, thereby effecting transcription repression. The polypeptide is HTH-type transcriptional repressor PurR (Vibrio vulnificus (strain CMCP6)).